The chain runs to 508 residues: Cobyric acid synthase (508 aa).

Residues 255 to 454 (ELNIAVLKLP…LHGVFESGPW (200 aa)) enclose the GATase cobBQ-type domain. The Nucleophile role is filled by Cys336. His446 is an active-site residue.

The protein belongs to the CobB/CobQ family. CobQ subfamily.

It functions in the pathway cofactor biosynthesis; adenosylcobalamin biosynthesis. In terms of biological role, catalyzes amidations at positions B, D, E, and G on adenosylcobyrinic A,C-diamide. NH(2) groups are provided by glutamine, and one molecule of ATP is hydrogenolyzed for each amidation. The chain is Cobyric acid synthase from Synechococcus sp. (strain CC9311).